The following is a 2430-amino-acid chain: Spatacsin (2430 aa).

A phosphoserine mark is found at S1942 and S1943.

As to quaternary structure, interacts with AP5Z1, AP5B1, AP5S1 and ZFYVE26. As to expression, ubiquitously expressed at low level. Expressed in embryonic and adult cortical projection neurons.

Its subcellular location is the cytoplasm. It is found in the cytosol. The protein localises to the nucleus. The protein resides in the cell projection. It localises to the axon. Its subcellular location is the dendrite. It is found in the synapse. Functionally, may play a role in neurite plasticity by maintaining cytoskeleton stability and regulating synaptic vesicle transport. In Mus musculus (Mouse), this protein is Spatacsin (Spg11).